Reading from the N-terminus, the 1277-residue chain is Y' element ATP-dependent helicase YEL077C (1277 aa).

The 178-residue stretch at 222–399 (EIYMADTPSV…LQRIGLTGLA (178 aa)) folds into the Helicase ATP-binding domain. 235–242 (APPGYGKT) contacts ATP. Positions 345–348 (DEFH) match the DEAH box motif. Residues 454 to 605 (ALKLLLALFE…EFYGLESKKG (152 aa)) form the Helicase C-terminal domain. 2 disordered regions span residues 696 to 763 (NVRT…NATT) and 775 to 895 (TTKS…NRFH). Over residues 775 to 878 (TTKSINSSTN…ATTTESTNAS (104 aa)) the composition is skewed to low complexity. A compositionally biased stretch (basic and acidic residues) spans 879 to 895 (AKEDANKDGNAEDNRFH).

It belongs to the helicase family. Yeast subtelomeric Y' repeat subfamily.

In terms of biological role, catalyzes DNA unwinding and is involved in telomerase-independent telomere maintenance. This Saccharomyces cerevisiae (strain ATCC 204508 / S288c) (Baker's yeast) protein is Y' element ATP-dependent helicase YEL077C.